The chain runs to 455 residues: tRNA modification GTPase MnmE (455 aa).

Arginine 24, glutamate 81, and lysine 120 together coordinate (6S)-5-formyl-5,6,7,8-tetrahydrofolate. The TrmE-type G domain maps to 216-378 (GMTVVIAGRP…LREHLKHCMG (163 aa)). Asparagine 226 is a K(+) binding site. Residues 226–231 (NAGKSS), 245–251 (TDIAGTT), 270–273 (DTAG), and 335–338 (NKAD) each bind GTP. Serine 230 lines the Mg(2+) pocket. Residues threonine 245, isoleucine 247, and threonine 250 each coordinate K(+). Mg(2+) is bound at residue threonine 251. Lysine 455 lines the (6S)-5-formyl-5,6,7,8-tetrahydrofolate pocket.

Belongs to the TRAFAC class TrmE-Era-EngA-EngB-Septin-like GTPase superfamily. TrmE GTPase family. In terms of assembly, homodimer. Heterotetramer of two MnmE and two MnmG subunits. Requires K(+) as cofactor.

The protein localises to the cytoplasm. Its function is as follows. Exhibits a very high intrinsic GTPase hydrolysis rate. Involved in the addition of a carboxymethylaminomethyl (cmnm) group at the wobble position (U34) of certain tRNAs, forming tRNA-cmnm(5)s(2)U34. The chain is tRNA modification GTPase MnmE from Stutzerimonas stutzeri (strain A1501) (Pseudomonas stutzeri).